Consider the following 937-residue polypeptide: Protein translocase subunit SecA (937 aa).

ATP is bound by residues Gln90, Gly108 to Thr112, and Asp509.

Belongs to the SecA family. In terms of assembly, monomer and homodimer. Part of the essential Sec protein translocation apparatus which comprises SecA, SecYEG and auxiliary proteins SecDF. Other proteins may also be involved.

It is found in the cell inner membrane. It localises to the cellular thylakoid membrane. The protein localises to the cytoplasm. The catalysed reaction is ATP + H2O + cellular proteinSide 1 = ADP + phosphate + cellular proteinSide 2.. Functionally, part of the Sec protein translocase complex. Interacts with the SecYEG preprotein conducting channel. Has a central role in coupling the hydrolysis of ATP to the transfer of proteins into and across the cell membrane, serving as an ATP-driven molecular motor driving the stepwise translocation of polypeptide chains across the membrane. Its function is as follows. Probably participates in protein translocation into and across both the cytoplasmic and thylakoid membranes in cyanobacterial cells. This Parasynechococcus marenigrum (strain WH8102) protein is Protein translocase subunit SecA.